A 1034-amino-acid chain; its full sequence is FERM domain-containing protein 4B (1034 aa).

The FERM domain occupies 59 to 361 (RHCQVHLLDD…SQHQFYLDRK (303 aa)). Ser372 carries the post-translational modification Phosphoserine. Coiled coils occupy residues 417-450 (EVSE…ELKK) and 531-561 (KKKR…RCGK). Positions 542–971 (MKKLQEIENA…TQLTIGLSDY (430 aa)) are necessary for adherens junction and tight junction localization. The segment covering 576-589 (PSESSSLSDTTTYD) has biased composition (low complexity). 4 disordered regions span residues 576-614 (PSES…ILPP), 635-698 (DTRQ…LESQ), 712-735 (FSLS…YTSQ), and 752-786 (TTQT…AQKD). Ser608 bears the Phosphoserine mark. Polar residues-rich tracts occupy residues 635–650 (DTRQ…SSPY) and 663–674 (MPTTPVLTRNAY). Positions 675–685 (SSSHLEPESSS) are enriched in low complexity. Ser697 carries the phosphoserine modification. The span at 713 to 722 (SLSKSQRSSS) shows a compositional bias: low complexity. Polar residues predominate over residues 769–781 (QNVSTSNSGSMPN). A Glycyl lysine isopeptide (Lys-Gly) (interchain with G-Cter in SUMO2) cross-link involves residue Lys882. Disordered regions lie at residues 905–925 (RASG…SDRG) and 1004–1034 (DGTD…GTLV). Residues 906–920 (ASGQKDQGHSPQTSF) are compositionally biased toward polar residues. Ser915 is modified (phosphoserine). The segment covering 1018–1034 (SEQRLFWHEDSKPGTLV) has biased composition (basic and acidic residues). Lys1029 participates in a covalent cross-link: Glycyl lysine isopeptide (Lys-Gly) (interchain with G-Cter in SUMO2).

As to quaternary structure, interacts with CYTH3. Interacts with PARD3. Interacts with CYTH1.

Its subcellular location is the cytoplasm. The protein localises to the cytoskeleton. The protein resides in the cell junction. It is found in the tight junction. It localises to the adherens junction. Its function is as follows. Member of GRP1 signaling complexes that are acutely recruited to plasma membrane ruffles in response to insulin receptor signaling. May function as a scaffolding protein that regulates epithelial cell polarity by connecting ARF6 activation with the PAR3 complex. Plays a redundant role with FRMD4A in epithelial polarization. The protein is FERM domain-containing protein 4B of Homo sapiens (Human).